The following is a 687-amino-acid chain: A-kinase anchor protein 8 (687 aa).

An interaction with MCM2 region spans residues 1–195 (MEQSYGGYGA…FLRGRGQGRF (195 aa)). Residues 1 to 210 (MEQSYGGYGA…SSTFIRSDPF (210 aa)) are interaction with DPY30. Ser-72 is subject to Phosphoserine. Positions 104-124 (SKEGGRGGISSGGEGMQDRDS) are disordered. Arg-109 carries the post-translational modification Asymmetric dimethylarginine; alternate. Arg-109 is subject to Omega-N-methylarginine; alternate. The span at 109–118 (RGGISSGGEG) shows a compositional bias: gly residues. The tract at residues 109–201 (RGGISSGGEG…QGRFQDRSNS (93 aa)) is interaction with DDX5. Positions 127–152 (RFQPYESYDSRPCMPEHTPYRPSYSY) are nuclear matrix targeting site. Positions 189–221 (GRGQGRFQDRSNSSTFIRSDPFMPPSASSEPLS) are disordered. The residue at position 199 (Ser-199) is a Phosphoserine. 2 positions are modified to omega-N-methylarginine: Arg-233 and Arg-277. Residues 278–380 (SQTRIRDWPR…KQRRRDRMRD (103 aa)) are disordered. Basic and acidic residues-rich tracts occupy residues 281-295 (RIRD…ERFG) and 312-321 (PDAKLARADS). Residues 287–304 (RRRGFERFGPDNMGRKRK) carry the Bipartite nuclear localization signal motif. Residue Lys-315 forms a Glycyl lysine isopeptide (Lys-Gly) (interchain with G-Cter in SUMO2) linkage. 3 positions are modified to phosphoserine: Ser-321, Ser-326, and Ser-337. The span at 322–332 (EGDLSENDDGA) shows a compositional bias: acidic residues. The segment covering 336–358 (RSGDEEFRGEDDLCDSRKQRGEK) has biased composition (basic and acidic residues). The involved in chromatin-binding stretch occupies residues 385–448 (RIQFACSVCK…NKKIEKRRQE (64 aa)). 2 consecutive C2H2 AKAP95-type zinc fingers follow at residues 390 to 412 (CSVC…SKFH) and 479 to 502 (CLAC…SVDH). Residues 523 to 565 (SVLNNKHIVKMLEKYLKGEDPFVNETADLETEGDENLGEEKET) form an involved in condensin complex recruitment region. Thr-553 bears the Phosphothreonine mark. A Glycyl lysine isopeptide (Lys-Gly) (interchain with G-Cter in SUMO2) cross-link involves residue Lys-563. The RII-binding stretch occupies residues 568-585 (EVAAEVLAEVITAAVKAV). The required for interaction with MYCBP stretch occupies residues 572-589 (EVLAEVITAAVKAVEGDG). The segment at 606–687 (VDTAEAGSDS…DAEAKDTPTE (82 aa)) is disordered. Residues 633–648 (RNMEDMARGEAAEARN) show a composition bias toward basic and acidic residues. Positions 649 to 666 (EAAVPAAAAGSPVPVIAI) are enriched in low complexity. Position 659 is a phosphoserine (Ser-659).

It belongs to the AKAP95 family. Binds to dimeric RII-alpha regulatory subunit of PKA during mitosis. Interacts (via C-terminus) with FIGN. Interacts with NCAPD2, CCND1, CCND3, MCM2, RPS6KA1, PDE4A, CASP3. Interacts with DDX5, CCNE1. Interacts with NFKB1; detetcted in the cytoplasm. Interacts with MYCBP; MYCBP is translocated to the nucleus and the interaction prevents the association of the PKA catalytic subunit leading to suppression of PKA activity. Interacts with DPY30; mediating AKAP8 association with at least the MLL4/WBP7 HMT complex. Interacts with HDAC3; increased during mitosis. Interacts with GJA1; in the nucleus and in the nuclear membrane; the nuclear association increases with progress of cell cycle G1, S and G2 phase and decreases in M phase. In terms of processing, phosphorylated on tyrosine residues probably by SRC subfamily protein kinases; multiple phosphorylation is leading to dissociation from nuclear structures implicated in chromatin structural changes. In terms of tissue distribution, widely expressed. The protein has been detected in liver, fibroblasts, granulosa, myoblast, lymphoma and Sertoli cells.

It is found in the nucleus matrix. The protein resides in the nucleus. It localises to the nucleolus. Its subcellular location is the cytoplasm. Functionally, anchoring protein that mediates the subcellular compartmentation of cAMP-dependent protein kinase (PKA type II). Acts as an anchor for a PKA-signaling complex onto mitotic chromosomes, which is required for maintenance of chromosomes in a condensed form throughout mitosis. Recruits condensin complex subunit NCAPD2 to chromosomes required for chromatin condensation; the function appears to be independent from PKA-anchoring. May help to deliver cyclin D/E to CDK4 to facilitate cell cycle progression. Required for cell cycle G2/M transition and histone deacetylation during mitosis. In mitotic cells recruits HDAC3 to the vicinity of chromatin leading to deacetylation and subsequent phosphorylation at 'Ser-10' of histone H3; in this function may act redundantly with AKAP8L. Involved in nuclear retention of RPS6KA1 upon ERK activation thus inducing cell proliferation. May be involved in regulation of DNA replication by acting as scaffold for MCM2. Enhances HMT activity of the KMT2 family MLL4/WBP7 complex and is involved in transcriptional regulation. In a teratocarcinoma cell line is involved in retinoic acid-mediated induction of developmental genes implicating H3 'Lys-4' methylation. May be involved in recruitment of active CASP3 to the nucleus in apoptotic cells. May act as a carrier protein of GJA1 for its transport to the nucleus. May play a repressive role in the regulation of rDNA transcription. Preferentially binds GC-rich DNA in vitro. In cells, associates with ribosomal RNA (rRNA) chromatin, preferentially with rRNA promoter and transcribed regions. Involved in modulation of Toll-like receptor signaling. Required for the cAMP-dependent suppression of TNF-alpha in early stages of LPS-induced macrophage activation; the function probably implicates targeting of PKA to NFKB1. The polypeptide is A-kinase anchor protein 8 (Akap8) (Rattus norvegicus (Rat)).